A 314-amino-acid chain; its full sequence is Serine/threonine-protein phosphatase SIT4 (314 aa).

4 residues coordinate Mn(2+): Asp53, His55, Asp85, and Asn117. Catalysis depends on His118, which acts as the Proton donor. Residues His167 and His241 each contribute to the Mn(2+) site.

Belongs to the PPP phosphatase family. PP-6 (PP-V) subfamily. As to quaternary structure, interacts with MDS3. It depends on Mn(2+) as a cofactor.

It is found in the cytoplasm. It catalyses the reaction O-phospho-L-seryl-[protein] + H2O = L-seryl-[protein] + phosphate. The catalysed reaction is O-phospho-L-threonyl-[protein] + H2O = L-threonyl-[protein] + phosphate. Functionally, serine/threonine protein phosphatase which is involved in the dephosphorylation of the large subunit of RNA polymerase II. Is required in late G1 for normal G1 cyclin expression, bud initiation and expression of certain genes that are periodically expressed during late G1. Plays a role during hyphal growth through the regulation of cell wall biogenesis, osmosensing and protein translation. Involved in virulence in a mouse systemic infection model. This chain is Serine/threonine-protein phosphatase SIT4 (SIT4), found in Candida albicans (strain SC5314 / ATCC MYA-2876) (Yeast).